The primary structure comprises 120 residues: MMTGRQGRATFQFLPDEARSLPPPKLTDPRLAFVGFLGYCSGLIDNAIRRRPVLLAGLHRQLLYITSFVFVGYYLLKRQDYMYAVRDHDMFSYIKSHPEDFPEKDKKTYGEVFEEFHPVR.

Met-1 is modified (N-acetylmethionine). Residues 57–76 (GLHRQLLYITSFVFVGYYLL) traverse the membrane as a helical segment.

The protein belongs to the complex I NDUFC2 subunit family. As to quaternary structure, complex I is composed of 45 different subunits. Interacts with TMEM242. In terms of processing, there is a minor unacetylated form of subunit B14.5b.

It localises to the mitochondrion inner membrane. Functionally, accessory subunit of the mitochondrial membrane respiratory chain NADH dehydrogenase (Complex I), that is believed not to be involved in catalysis but required for the complex assembly. Complex I functions in the transfer of electrons from NADH to the respiratory chain. The immediate electron acceptor for the enzyme is believed to be ubiquinone. The sequence is that of NADH dehydrogenase [ubiquinone] 1 subunit C2 from Bos taurus (Bovine).